The sequence spans 371 residues: MFTPPTDPKKSVKVKVSQLCELCHARKAVMKRPKNLQRICKECFFSVFETEIHNTIVSNNLFHRGERIAVGASGGKDSTVLAYVLKLLNDRHDYGVEIVLLSIDEGIVGYRDDSLATVKRNQVQYDLPLEIVSYKDLYNWTMDEIVACAGIRNSCTYCGVFRRQALDRGAAKLGIKHVVTGHNADDMAETVLMNILRGDVARLEKSTSILTQSSGSPIKRSKPFKYSYQKEIVLYAHYKKLDYFSTECSYAPEAFRGTARELMKNLEAIRPSCIIDIIHSGESLKLKPKRAKKAPPPSHMEIRPDGSVSLQNEFIDGNRCERCGYLSSNKICKACMLLEGLEQNRAKIQLEKDSTTEGAAKLSRTLEKLQF.

The protein belongs to the TtcA family. CTU1/NCS6/ATPBD3 subfamily.

The protein localises to the cytoplasm. It functions in the pathway tRNA modification; 5-methoxycarbonylmethyl-2-thiouridine-tRNA biosynthesis. Functionally, plays a central role in 2-thiolation of mcm(5)S(2)U at tRNA wobble positions of tRNA(Lys), tRNA(Glu) and tRNA(Gln). Directly binds tRNAs and probably acts by catalyzing adenylation of tRNAs, an intermediate required for 2-thiolation. It is unclear whether it acts as a sulfurtransferase that transfers sulfur from thiocarboxylated URM1 onto the uridine of tRNAs at wobble position. Prior mcm(5) tRNA modification by the elongator complex is required for 2-thiolation. May also be involved in protein urmylation. This Kluyveromyces lactis (strain ATCC 8585 / CBS 2359 / DSM 70799 / NBRC 1267 / NRRL Y-1140 / WM37) (Yeast) protein is Cytoplasmic tRNA 2-thiolation protein 1.